Reading from the N-terminus, the 234-residue chain is Urease accessory protein UreF (234 aa).

This sequence belongs to the UreF family. In terms of assembly, ureD, UreF and UreG form a complex that acts as a GTP-hydrolysis-dependent molecular chaperone, activating the urease apoprotein by helping to assemble the nickel containing metallocenter of UreC. The UreE protein probably delivers the nickel.

The protein localises to the cytoplasm. Required for maturation of urease via the functional incorporation of the urease nickel metallocenter. This chain is Urease accessory protein UreF, found in Kocuria rhizophila (strain ATCC 9341 / DSM 348 / NBRC 103217 / DC2201).